Consider the following 92-residue polypeptide: Small ribosomal subunit protein uS19 (92 aa).

It belongs to the universal ribosomal protein uS19 family.

Its function is as follows. Protein S19 forms a complex with S13 that binds strongly to the 16S ribosomal RNA. The sequence is that of Small ribosomal subunit protein uS19 from Exiguobacterium sibiricum (strain DSM 17290 / CCUG 55495 / CIP 109462 / JCM 13490 / 255-15).